A 272-amino-acid chain; its full sequence is NAD kinase (272 aa).

Catalysis depends on D50, which acts as the Proton acceptor. NAD(+) contacts are provided by residues 50-51 (DG), 126-127 (NE), R152, D154, 165-170 (TAYNKS), and A189.

Belongs to the NAD kinase family. A divalent metal cation is required as a cofactor.

The protein resides in the cytoplasm. The catalysed reaction is NAD(+) + ATP = ADP + NADP(+) + H(+). Involved in the regulation of the intracellular balance of NAD and NADP, and is a key enzyme in the biosynthesis of NADP. Catalyzes specifically the phosphorylation on 2'-hydroxyl of the adenosine moiety of NAD to yield NADP. The polypeptide is NAD kinase (Streptococcus pneumoniae (strain Hungary19A-6)).